Here is a 315-residue protein sequence, read N- to C-terminus: p-hydroxyphenylacetate 3-hydroxylase, reductase component (315 aa).

Belongs to the non-flavoprotein flavin reductase family. As to quaternary structure, homodimer. The p-hydroxyphenylacetate 3-hydroxylase (HpaH) is composed of an oxygenase component C2 and a reductase component C1.

It catalyses the reaction a reduced flavin + NAD(+) = an oxidized flavin + NADH + 2 H(+). It participates in aromatic compound metabolism; 4-hydroxyphenylacetate degradation; pyruvate and succinate semialdehyde from 4-hydroxyphenylacetate: step 1/7. With respect to regulation, flavin concentrations greater than 15 uM do not inhibit the NADH oxidation activity of the reductase component C1 but do affect the hydroxylation activity of the C1-C2 complex. Maximal reductase activity is achieved only upon HPA binding to the reductase component C1 before interaction with NADH. HPA stimulates the rates of both the reduction of FMN and release of reduced FMN from the reductase component. Reductase component of a two-component system that supplies reduced FMN (FMNH2) to the oxygenase component to catalyze the hydroxylation of 4-hydroxyphenylacetic acid, leading to the production of 3,4-dihydroxyphenylacetate (3,4-DHPA). Catalyzes the reduction of free flavins (FMN, FAD and riboflavin) by NADH. Subsequently, the reduced flavins diffuse to the oxygenase component C2. This chain is p-hydroxyphenylacetate 3-hydroxylase, reductase component, found in Acinetobacter baumannii.